The following is a 309-amino-acid chain: Tagatose-6-phosphate kinase (309 aa).

It belongs to the carbohydrate kinase PfkB family. LacC subfamily.

It carries out the reaction D-tagatofuranose 6-phosphate + ATP = D-tagatofuranose 1,6-bisphosphate + ADP + H(+). It participates in carbohydrate metabolism; D-tagatose 6-phosphate degradation; D-glyceraldehyde 3-phosphate and glycerone phosphate from D-tagatose 6-phosphate: step 1/2. This chain is Tagatose-6-phosphate kinase, found in Streptococcus pyogenes serotype M3 (strain SSI-1).